The sequence spans 307 residues: Pseudouridine-5'-phosphate glycosidase (307 aa).

The Proton donor role is filled by Glu-28. Lys-89 and Val-109 together coordinate substrate. Asp-141 contacts Mn(2+). 143 to 145 (SAD) is a substrate binding site. Residue Lys-162 is the Nucleophile of the active site.

This sequence belongs to the pseudouridine-5'-phosphate glycosidase family. Homotrimer. Mn(2+) serves as cofactor.

It catalyses the reaction D-ribose 5-phosphate + uracil = psi-UMP + H2O. Catalyzes the reversible cleavage of pseudouridine 5'-phosphate (PsiMP) to ribose 5-phosphate and uracil. Functions biologically in the cleavage direction, as part of a pseudouridine degradation pathway. This is Pseudouridine-5'-phosphate glycosidase from Nocardioides sp. (strain ATCC BAA-499 / JS614).